Consider the following 84-residue polypeptide: Large ribosomal subunit protein bL27 (84 aa).

Residues 1-22 are disordered; the sequence is MAHKKAGGSTRNGRDSESKRLG.

Belongs to the bacterial ribosomal protein bL27 family.

The chain is Large ribosomal subunit protein bL27 from Shewanella denitrificans (strain OS217 / ATCC BAA-1090 / DSM 15013).